The chain runs to 387 residues: MSSELTSKVDKEARKKAADTLRQVFVKLIEQINNSEPPTMEIPKRTLGNTIYDEKRKLLLLGEEKLKRSFFDLNESKRFMQTVLMASIIYDALINDEYPTIRDLYYRGKHSIILKDPRGKTYEENTWDEQKESDSVIMDIEVFTSLLREDMLILSKEKGKVVGDMRIRSGNDIIDLSKMGHGAYSIEPTPDLIDFVDINAEFVLVVEKDAVFQQLHRAGFWKQYKAILVTSAGQPDRATRRFVRRLNEELKLPVYILTDADPYGWYIYSVFRIGSISLSYESERLATPNAKFLGVSMTDIFGDSNKKPYLSEQERRNYIIKAKDADIKRATEIKNYQWFKTKAWQHEIEIFLNKKSKLEIEAMASKGLKFLAFQYIPEKIKSKDYIE.

The Topo IIA-type catalytic domain occupies 12–160; sequence EARKKAADTL…MLILSKEKGK (149 aa). Catalysis depends on Tyr106, which acts as the O-(5'-phospho-DNA)-tyrosine intermediate. Mg(2+)-binding residues include Glu207 and Asp259.

This sequence belongs to the TOP6A family. As to quaternary structure, homodimer. Heterotetramer of two Top6A and two Top6B chains. Requires Mg(2+) as cofactor.

It carries out the reaction ATP-dependent breakage, passage and rejoining of double-stranded DNA.. Functionally, relaxes both positive and negative superturns and exhibits a strong decatenase activity. In Sulfurisphaera tokodaii (strain DSM 16993 / JCM 10545 / NBRC 100140 / 7) (Sulfolobus tokodaii), this protein is Type 2 DNA topoisomerase 6 subunit A.